The following is a 210-amino-acid chain: Frataxin, mitochondrial (210 aa).

The N-terminal 41 residues, 1 to 41 (MWTLGRRAVAGLLASPSPAQAQTLTRVPRPAELAPLCGRRG), are a transit peptide targeting the mitochondrion.

The protein belongs to the frataxin family. Component of the mitochondrial core iron-sulfur cluster (ISC) complex composed of NFS1, LYRM4, NDUFAB1, ISCU, FXN, and FDX2; this complex is a heterohexamer containing two copies of each monomer. Homodimer. Monomer (probable predominant form). Oligomer. Monomers and polymeric aggregates of &gt;1 MDa have been isolated from mitochondria. A small fraction of heterologous overexpressed recombinant frataxin forms high-molecular weight aggregates that incorporate iron. Interacts with LYRM4. Interacts (via ferrous form) with ISCU; the interaction is possible when both are bound to the dimeric form of the cysteine desulfurase complex (NFS1:LYRM4) and the interaction enhances FXN interaction to the dimeric form of the cysteine desulfurase complex (NFS1:LYRM4). Interacts with FECH; one iron-bound FXN monomer seems to interact with a FECH homodimer. Interacts with SDHA and SDHB. Interacts with ACO2; the interaction is dependent on citrate. Interacts with HSPA9. As to quaternary structure, interacts with ACO1. Interacts with ISCU (cytoplasmic form). Post-translationally, processed in two steps by mitochondrial processing peptidase (MPP). MPP first cleaves the precursor to intermediate form and subsequently converts the intermediate to yield frataxin mature form (frataxin(81-210)) which is the predominant form. The additional forms, frataxin(56-210) and frataxin(78-210), seem to be produced when the normal maturation process is impaired; their physiological relevance is unsure. Expressed in the heart, peripheral blood lymphocytes and dermal fibroblasts.

The protein resides in the mitochondrion. It is found in the cytoplasm. Its subcellular location is the cytosol. The enzyme catalyses 4 Fe(2+) + O2 + 4 H(+) = 4 Fe(3+) + 2 H2O. Functionally, functions as an activator of persulfide transfer to the scaffoding protein ISCU as component of the core iron-sulfur cluster (ISC) assembly complex and participates to the [2Fe-2S] cluster assembly. Accelerates sulfur transfer from NFS1 persulfide intermediate to ISCU and to small thiols such as L-cysteine and glutathione leading to persulfuration of these thiols and ultimately sulfide release. Binds ferrous ion and is released from FXN upon the addition of both L-cysteine and reduced FDX2 during [2Fe-2S] cluster assembly. The core iron-sulfur cluster (ISC) assembly complex is involved in the de novo synthesis of a [2Fe-2S] cluster, the first step of the mitochondrial iron-sulfur protein biogenesis. This process is initiated by the cysteine desulfurase complex (NFS1:LYRM4:NDUFAB1) that produces persulfide which is delivered on the scaffold protein ISCU in a FXN-dependent manner. Then this complex is stabilized by FDX2 which provides reducing equivalents to accomplish the [2Fe-2S] cluster assembly. Finally, the [2Fe-2S] cluster is transferred from ISCU to chaperone proteins, including HSCB, HSPA9 and GLRX5. May play a role in the protection against iron-catalyzed oxidative stress through its ability to catalyze the oxidation of Fe(2+) to Fe(3+); the oligomeric form but not the monomeric form has in vitro ferroxidase activity. May be able to store large amounts of iron in the form of a ferrihydrite mineral by oligomerization; however, the physiological relevance is unsure as reports are conflicting and the function has only been shown using heterologous overexpression systems. May function as an iron chaperone protein that protects the aconitase [4Fe-4S]2+ cluster from disassembly and promotes enzyme reactivation. May play a role as a high affinity iron binding partner for FECH that is capable of both delivering iron to ferrochelatase and mediating the terminal step in mitochondrial heme biosynthesis. In terms of biological role, modulates the RNA-binding activity of ACO1. May be involved in the cytoplasmic iron-sulfur protein biogenesis. May contribute to oxidative stress resistance and overall cell survival. This chain is Frataxin, mitochondrial, found in Homo sapiens (Human).